A 371-amino-acid polypeptide reads, in one-letter code: RNA-binding protein 48 (371 aa).

Positions Gln-46 to Glu-124 constitute an RRM domain. Disordered regions lie at residues Lys-157–Pro-191 and Val-348–Ile-371. Residues Pro-158 to Gln-170 are compositionally biased toward basic and acidic residues.

The protein belongs to the RBM48 family. Component of the minor spliceosome. Within this complex, interacts with ARMC7 and PRPF8/PRP8.

Functionally, as a component of the minor spliceosome, involved in the splicing of U12-type introns in pre-mRNAs. This chain is RNA-binding protein 48 (Rbm48), found in Mus musculus (Mouse).